Consider the following 320-residue polypeptide: MILCLSFLLMIGFSLIAEGFSFIIPKGYLYAAIGFSVMIEALNQLAQFNRRRFLSANMTLRQRTTEAVMNLLSGQKEKAELDADTASLVADQDQHPLFNPQERLMIERVLNLNQRSVSSIMTSRHDIERINLSAPEEEIRSLVEKNQHTRLVVTGGKDNEDLLGVVHVIDLLQQSLRQEPLDLQALVRQPLVFPEGLPLLSALEQFRQARTHFAFVVDEFGSVEGIVTLSDVMETIAGNLPNEVEEIDARHDIQHHQDGSWTVNGHMPLEDLVQYVPLPLDDKREYHTVAGLLMEYLQHVPQWGRPLRLTVIPCARCRST.

A helical membrane pass occupies residues 4–24 (CLSFLLMIGFSLIAEGFSFII). 2 CBS domains span residues 121–183 (MTSR…PLDL) and 186–244 (LVRQ…PNEV).

Belongs to the UPF0053 family.

The protein resides in the cell membrane. This chain is UPF0053 protein in cps region, found in Klebsiella pneumoniae.